Consider the following 127-residue polypeptide: Large ribosomal subunit protein eL32 (127 aa).

Positions 37–48 (KWRKPKGTDSKM) are enriched in basic and acidic residues. The disordered stretch occupies residues 37-65 (KWRKPKGTDSKMRVKLKGKARSPSIGWSS).

Belongs to the eukaryotic ribosomal protein eL32 family.

The protein is Large ribosomal subunit protein eL32 of Thermococcus sibiricus (strain DSM 12597 / MM 739).